The primary structure comprises 821 residues: MNEVPTTPVRLILGQAQQREQNSENCSQERNPRTFNSEPDSSFNSPGSSQFVIHPHEPLEKEKDEKQDLDRSIDYGRSSALNNKNNANPLENIDINKMFDDKKSDSGTNDDKGGASTSDKHVLALNYSPIRVEMNSSEKRSDKNVDVDENDKEGSHINKKLKLQLESVPDLKQSSTKDIINDKEEIMSSPMAIDMIETNISPNKFIINDGVERNDSFNINTDTLKLENDINEKQQEEDFIKSNSNNVVNIDNAYKEKEDEENDITNSHINRLTPLYETSARESNSNEEGRNDYDDDNQLDIRHDNFQIVAKRNEELTDQIYHLNQMLNSLISKNESLSFQYEKLNKNHQLLIDLTNEKLDKLNTERESDIAKVEKFKKRIKELNTEIKVLNSNQKILQEKFDASITEVNHIKGEHENTVNTLQQNEKILNDKNVELENMKAELKGNNDKLSEYETTLNDLNSRIVQLNDKIESTDIVLKSKENELDNLKLSLKETLSISKDFNDSDLIGQINELISTKNNLQQKMDDLNNLNDDNLKVVQDKLIKNEETLKLKEAEIDSLNSEMDELKKQITSKDDEFKMWQSKYETVEDEAKIRNAEVTELNGDIEDLKESKLHLEETITELENKVHKLENECELEKQKFEKTSLELESLQLKNSNIQAEHIKELENLHENLISLQNELKISSDRITTLTKENEVLMEQNNNNNNSVTLSNDQKDRDDEKIKSLGKQVQDWKEKYEAKEKDTNKRLKLLAEDLYIQYSSKHEQKVKLLKKGYENKYQNKFDQLNLENKTLSEEIEQLNKQLSSEREEKQELLKLLENEKK.

2 disordered regions span residues 1–52 (MNEV…SQFV) and 99–153 (FDDK…NDKE). Thr7 is subject to Phosphothreonine; by CDC28. Residues 15 to 51 (QAQQREQNSENCSQERNPRTFNSEPDSSFNSPGSSQF) show a composition bias toward polar residues. Composition is skewed to basic and acidic residues over residues 99-122 (FDDK…DKHV) and 136-153 (SSEK…NDKE). Phosphoserine is present on residues Ser188 and Ser189. A Phosphoserine; by CDC28 modification is found at Ser201. The residue at position 216 (Ser216) is a Phosphoserine. Thr273 carries the post-translational modification Phosphothreonine. Disordered regions lie at residues 274–298 (PLYE…DDNQ) and 699–720 (EQNN…RDDE). Ser283 is subject to Phosphoserine. A coiled-coil region spans residues 310–821 (AKRNEELTDQ…LLKLLENEKK (512 aa)).

Post-translationally, cleaved by ESP1 at the onset of anaphase. Phosphorylated by CDC5/Polo-like kinase at the onset of anaphase. Phosphorylation takes places at proximity to cleavage sites and is required for an efficient cleavage by ESP1. Phosphorylated also by CDC28.

Its subcellular location is the chromosome. It localises to the centromere. The protein resides in the kinetochore. The protein localises to the cytoplasm. It is found in the cytoskeleton. Its subcellular location is the microtubule organizing center. It localises to the spindle pole body. Its function is as follows. Has a role in spindle assembly and stability. Required to ensure a timely exit form mitosis. Essential to maintain pre-anaphase spindle polarity. Associates to the plus ends of the microtubules at the kinetochore and spindle midzone. A component of the FEAR (CDC14 Early Anaphase Release) network which promotes CDC14 release from the nucleolus during early anaphase. Required for proper chromosome segregation during meiosis I where it prevents premature sister chromatid separation. The sequence is that of Kinetochore protein SLK19 (SLK19) from Saccharomyces cerevisiae (strain ATCC 204508 / S288c) (Baker's yeast).